The primary structure comprises 151 residues: Transcriptional repressor NrdR (151 aa).

Residues 3–34 (CPYCGYGESKVVDSRATDDKMAIRRRRECLKC) fold into a zinc finger. The ATP-cone domain occupies 49 to 139 (LLVIKKNMSR…VYRQFKDINT (91 aa)).

Belongs to the NrdR family. Zn(2+) is required as a cofactor.

In terms of biological role, negatively regulates transcription of bacterial ribonucleotide reductase nrd genes and operons by binding to NrdR-boxes. The protein is Transcriptional repressor NrdR of Clostridium kluyveri (strain NBRC 12016).